A 98-amino-acid chain; its full sequence is DNA-binding protein Fis (98 aa).

Positions glutamine 74–lysine 93 form a DNA-binding region, H-T-H motif.

This sequence belongs to the transcriptional regulatory Fis family. In terms of assembly, homodimer.

In terms of biological role, activates ribosomal RNA transcription. Plays a direct role in upstream activation of rRNA promoters. The sequence is that of DNA-binding protein Fis from Citrobacter koseri (strain ATCC BAA-895 / CDC 4225-83 / SGSC4696).